The sequence spans 122 residues: Large ribosomal subunit protein uL18 (122 aa).

Belongs to the universal ribosomal protein uL18 family. Part of the 50S ribosomal subunit; part of the 5S rRNA/L5/L18/L25 subcomplex. Contacts the 5S and 23S rRNAs.

In terms of biological role, this is one of the proteins that bind and probably mediate the attachment of the 5S RNA into the large ribosomal subunit, where it forms part of the central protuberance. The chain is Large ribosomal subunit protein uL18 from Citrifermentans bemidjiense (strain ATCC BAA-1014 / DSM 16622 / JCM 12645 / Bem) (Geobacter bemidjiensis).